Reading from the N-terminus, the 459-residue chain is Neuronal acetylcholine receptor subunit beta-2 (459 aa).

The Extracellular portion of the chain corresponds to 1-203 (LRSDFLLGPE…ITYDFVIKRK (203 aa)). 2 N-linked (GlcNAc...) asparagine glycosylation sites follow: Asn-21 and Asn-138. Cys-125 and Cys-139 are joined by a disulfide. The chain crosses the membrane as a helical span at residues 204-228 (PLFYTINLIIPCVLITSLAILVFYL). Residues 229 to 235 (PSDCGEK) lie on the Cytoplasmic side of the membrane. A helical transmembrane segment spans residues 236 to 254 (VTLCMSVLLALTVFLLLIS). Topologically, residues 255-269 (KIVPPTSLAVPLIGK) are extracellular. A helical membrane pass occupies residues 270 to 291 (YLMFTMVLVTFSIVTSVCVLNV). The Cytoplasmic segment spans residues 292-421 (HHRSPSTHYM…WKYVAMVIDR (130 aa)). A helical membrane pass occupies residues 422 to 440 (LFLWIFILVCVVGTLGLFV).

This sequence belongs to the ligand-gated ion channel (TC 1.A.9) family. Acetylcholine receptor (TC 1.A.9.1) subfamily. Beta-2/CHRNB2 sub-subfamily. Neuronal AChR is a heteropentamer composed of two different types of subunits: alpha and beta. CHRNB2/Beta-2 subunit can be combined to CHRNA2/alpha-2, CHRNA3/alpha-3 or CHRNA4/alpha-4, CHRNA5/alpha-5, CHRNA6/alpha-6 and CHRNB3/beta-3 to give rise to functional receptors.

The protein localises to the synaptic cell membrane. Its subcellular location is the cell membrane. The enzyme catalyses Ca(2+)(in) = Ca(2+)(out). The catalysed reaction is K(+)(in) = K(+)(out). It carries out the reaction Na(+)(in) = Na(+)(out). Its activity is regulated as follows. Activated by a myriad of ligands such as acetylcholine, cytisine, nicotine, choline and epibatidine. nAChR activity is inhibited by the antagonist alpha-conotoxins BuIA, PnIA, PnIC, GID and MII, small disulfide-constrained peptides from cone snails. Functionally, component of neuronal acetylcholine receptors (nAChRs) that function as pentameric, ligand-gated cation channels with high calcium permeability among other activities. nAChRs are excitatory neurotrasnmitter receptors formed by a collection of nAChR subunits known to mediate synaptic transmission in the nervous system and the neuromuscular junction. Each nAchR subunit confers differential attributes to channel properties, including activation, deactivation and desensitization kinetics, pH sensitivity, cation permeability, and binding to allosteric modulators. CHRNB2 forms heteropentameric neuronal acetylcholine receptors with CHRNA2, CHRNA3, CHRNA4 and CHRNA6, as well as CHRNA5 and CHRNB3 as accesory subunits. In Carassius auratus (Goldfish), this protein is Neuronal acetylcholine receptor subunit beta-2 (chrnb2).